A 152-amino-acid polypeptide reads, in one-letter code: YDVESTDEDGWKKILVFLTFQHINFKEFISILCMWLKGRPKKSCITIAGVPDSGKSMFAYSLIKFLNGSVLSFANSKSHFWLQPLTECKAALIDDVTLPCWDYVDTFLRNALDGNAICIDCKHRAPVQTKCPPLLLTSNYDPRLHGVDSGGG.

Positions 23 to 152 constitute an SF3 helicase domain; that stretch reads INFKEFISIL…RLHGVDSGGG (130 aa). An ATP-binding site is contributed by 49–56; it reads GVPDSGKS.

The protein belongs to the papillomaviridae E1 protein family.

The protein resides in the host nucleus. The enzyme catalyses Couples ATP hydrolysis with the unwinding of duplex DNA by translocating in the 3'-5' direction.. It catalyses the reaction ATP + H2O = ADP + phosphate + H(+). In terms of biological role, ATP-dependent DNA 3'-5' helicase required for initiation of viral DNA replication. It forms a complex with the viral E2 protein. The E1-E2 complex binds to the replication origin which contains binding sites for both proteins. During the initial step, a dimer of E1 interacts with a dimer of protein E2 leading to a complex that binds the viral origin of replication with high specificity. Then, a second dimer of E1 displaces the E2 dimer in an ATP-dependent manner to form the E1 tetramer. Following this, two E1 monomers are added to each half of the site, which results in the formation of two E1 trimers on the viral ori. Subsequently, two hexamers will be created. The double hexamer acts as a bi-directional helicase machinery and unwinds the viral DNA and then recruits the host DNA polymerase to start replication. The sequence is that of Replication protein E1 (E1) from Avian papillomavirus fpv-l.